Reading from the N-terminus, the 157-residue chain is SsrA-binding protein (157 aa).

The protein belongs to the SmpB family.

It is found in the cytoplasm. Required for rescue of stalled ribosomes mediated by trans-translation. Binds to transfer-messenger RNA (tmRNA), required for stable association of tmRNA with ribosomes. tmRNA and SmpB together mimic tRNA shape, replacing the anticodon stem-loop with SmpB. tmRNA is encoded by the ssrA gene; the 2 termini fold to resemble tRNA(Ala) and it encodes a 'tag peptide', a short internal open reading frame. During trans-translation Ala-aminoacylated tmRNA acts like a tRNA, entering the A-site of stalled ribosomes, displacing the stalled mRNA. The ribosome then switches to translate the ORF on the tmRNA; the nascent peptide is terminated with the 'tag peptide' encoded by the tmRNA and targeted for degradation. The ribosome is freed to recommence translation, which seems to be the essential function of trans-translation. The protein is SsrA-binding protein of Lacticaseibacillus paracasei (strain ATCC 334 / BCRC 17002 / CCUG 31169 / CIP 107868 / KCTC 3260 / NRRL B-441) (Lactobacillus paracasei).